The sequence spans 331 residues: UDP-N-acetylenolpyruvoylglucosamine reductase (331 aa).

Residues 54-221 enclose the FAD-binding PCMH-type domain; it reads RVGGAAELYV…TQATFQLQPG (168 aa). R200 is an active-site residue. S251 (proton donor) is an active-site residue. E321 is an active-site residue.

It belongs to the MurB family. The cofactor is FAD.

It localises to the cytoplasm. It catalyses the reaction UDP-N-acetyl-alpha-D-muramate + NADP(+) = UDP-N-acetyl-3-O-(1-carboxyvinyl)-alpha-D-glucosamine + NADPH + H(+). Its pathway is cell wall biogenesis; peptidoglycan biosynthesis. Functionally, cell wall formation. The chain is UDP-N-acetylenolpyruvoylglucosamine reductase from Trichormus variabilis (strain ATCC 29413 / PCC 7937) (Anabaena variabilis).